We begin with the raw amino-acid sequence, 529 residues long: Bifunctional purine biosynthesis protein PurH (529 aa).

Positions 1-148 (MQQRRPVRRA…KNHKDVAIVV (148 aa)) constitute an MGS-like domain.

This sequence belongs to the PurH family.

It carries out the reaction (6R)-10-formyltetrahydrofolate + 5-amino-1-(5-phospho-beta-D-ribosyl)imidazole-4-carboxamide = 5-formamido-1-(5-phospho-D-ribosyl)imidazole-4-carboxamide + (6S)-5,6,7,8-tetrahydrofolate. The catalysed reaction is IMP + H2O = 5-formamido-1-(5-phospho-D-ribosyl)imidazole-4-carboxamide. The protein operates within purine metabolism; IMP biosynthesis via de novo pathway; 5-formamido-1-(5-phospho-D-ribosyl)imidazole-4-carboxamide from 5-amino-1-(5-phospho-D-ribosyl)imidazole-4-carboxamide (10-formyl THF route): step 1/1. It functions in the pathway purine metabolism; IMP biosynthesis via de novo pathway; IMP from 5-formamido-1-(5-phospho-D-ribosyl)imidazole-4-carboxamide: step 1/1. This chain is Bifunctional purine biosynthesis protein PurH, found in Salmonella newport (strain SL254).